We begin with the raw amino-acid sequence, 427 residues long: Enolase (427 aa).

Gln-163 contacts (2R)-2-phosphoglycerate. Glu-205 serves as the catalytic Proton donor. The Mg(2+) site is built by Asp-242, Glu-283, and Asp-310. Residues Lys-335, Arg-364, Ser-365, and Lys-386 each coordinate (2R)-2-phosphoglycerate. The active-site Proton acceptor is Lys-335.

The protein belongs to the enolase family. Mg(2+) serves as cofactor.

It localises to the cytoplasm. It is found in the secreted. The protein resides in the cell surface. It catalyses the reaction (2R)-2-phosphoglycerate = phosphoenolpyruvate + H2O. It participates in carbohydrate degradation; glycolysis; pyruvate from D-glyceraldehyde 3-phosphate: step 4/5. Functionally, catalyzes the reversible conversion of 2-phosphoglycerate (2-PG) into phosphoenolpyruvate (PEP). It is essential for the degradation of carbohydrates via glycolysis. This Salinispora tropica (strain ATCC BAA-916 / DSM 44818 / JCM 13857 / NBRC 105044 / CNB-440) protein is Enolase.